A 93-amino-acid polypeptide reads, in one-letter code: Putative transmembrane protein ORF25 (93 aa).

A run of 3 helical transmembrane segments spans residues 1 to 21 (MAGI…NVNA), 22 to 42 (FLVL…YASI), and 60 to 80 (LWIF…VMSL).

Its subcellular location is the host membrane. In His1 virus (isolate Australia/Victoria) (His1V), this protein is Putative transmembrane protein ORF25.